Here is a 430-residue protein sequence, read N- to C-terminus: Protein AST2 (430 aa).

Its function is as follows. Lipid raft-associated protein involved in the targeting of PMA1 from Golgi to the plasma membrane. May induce clustering of PMA1, which facilitates partition of PMA1 into lipid rafts after leaving the ER its and transport to the cell surface. This Saccharomyces cerevisiae (strain ATCC 204508 / S288c) (Baker's yeast) protein is Protein AST2.